Consider the following 416-residue polypeptide: Probable sarcosine oxidase (416 aa).

FAD is bound at residue 10-40 (DVIVVGAGVMGSSAAYQLAKRGQKTLLLEQF). S-8alpha-FAD cysteine is present on C325.

Belongs to the MSOX/MTOX family. Requires FAD as cofactor.

It carries out the reaction sarcosine + O2 + H2O = formaldehyde + glycine + H2O2. This Arabidopsis thaliana (Mouse-ear cress) protein is Probable sarcosine oxidase.